A 322-amino-acid polypeptide reads, in one-letter code: FAD-dependent monooxygenase subE (322 aa).

Glu35, Gly49, Arg108, and Asp313 together coordinate FAD.

This sequence belongs to the paxM FAD-dependent monooxygenase family. FAD serves as cofactor.

The protein operates within secondary metabolite biosynthesis; terpenoid biosynthesis. FAD-dependent monooxygenase; part of the gene cluster that mediates the biosynthesis of the immunosuppressants subglutinols, meroterpenoids consisting of an alpha-pyrone (4-hydroxy-5,6-dimethyl-2-pyrone) moiety attached to a decalin core fused to a five-membered cyclic ether carrying a prenylside chain. The first step of the pathway is the synthesis of the alpha-pyrone moiety by the polyketide synthase subA via condensation of one acetyl-CoA starter unit with 3 malonyl-CoA units and 2 methylations. The alpha-pyrone is then combined with geranylgeranyl pyrophosphate (GGPP) formed by the GGPP synthase subD through the action of the prenyltransferase subC to yield a linear alpha-pyrone diterpenoid. Subsequent steps in the subglutinol biosynthetic pathway involve the decalin core formation, which is thought to be initiated by the epoxidation of the C10-C11 olefin by the FAD-dependent oxidoreductase subE. The following cyclization cascade would be catalyzed by the terpene cyclase subB. Lastly, the FAD-dependent dehydrogenase subF probably catalyzes the five-membered cyclic ether formation to complete the formation of subglutinol A. Subsequent redox reactions appear to give rise to subglutinol C and D, however, it remains unclear which enzymes are responsible for these transformations. SubD may have secondary function in the conversion of the identified subglutinols to subglutinol analog 45, which seems to be the major product of the cluster. The chain is FAD-dependent monooxygenase subE from Metarhizium robertsii (strain ARSEF 23 / ATCC MYA-3075) (Metarhizium anisopliae (strain ARSEF 23)).